The following is a 620-amino-acid chain: 1-deoxy-D-xylulose-5-phosphate synthase (620 aa).

Residues histidine 75 and 116–118 (AHS) each bind thiamine diphosphate. Position 147 (aspartate 147) interacts with Mg(2+). Thiamine diphosphate contacts are provided by residues 148 to 149 (GA), asparagine 177, tyrosine 284, and glutamate 366. Asparagine 177 provides a ligand contact to Mg(2+).

This sequence belongs to the transketolase family. DXPS subfamily. As to quaternary structure, homodimer. It depends on Mg(2+) as a cofactor. Thiamine diphosphate is required as a cofactor.

It carries out the reaction D-glyceraldehyde 3-phosphate + pyruvate + H(+) = 1-deoxy-D-xylulose 5-phosphate + CO2. The protein operates within metabolic intermediate biosynthesis; 1-deoxy-D-xylulose 5-phosphate biosynthesis; 1-deoxy-D-xylulose 5-phosphate from D-glyceraldehyde 3-phosphate and pyruvate: step 1/1. Catalyzes the acyloin condensation reaction between C atoms 2 and 3 of pyruvate and glyceraldehyde 3-phosphate to yield 1-deoxy-D-xylulose-5-phosphate (DXP). This chain is 1-deoxy-D-xylulose-5-phosphate synthase, found in Bordetella avium (strain 197N).